The sequence spans 824 residues: Translation initiation factor IF-2 (824 aa).

A disordered region spans residues 1–234 (MSDQDGKKPL…RQKAMGGSVD (234 aa)). Composition is skewed to basic and acidic residues over residues 59-75 (GGKR…DRRL) and 82-144 (KARE…RRNA). Low complexity predominate over residues 145–159 (PPEAAAPAVDPAAAA). Basic and acidic residues predominate over residues 170 to 186 (ARREPERDNKRENRSRG). In terms of domain architecture, tr-type G spans 321-491 (PRPPVITIMG…ALQAELLELK (171 aa)). A G1 region spans residues 330–337 (GHVDHGKT). GTP is bound at residue 330 to 337 (GHVDHGKT). The tract at residues 355 to 359 (GITQH) is G2. A G3 region spans residues 377–380 (DTPG). GTP is bound by residues 377 to 381 (DTPGH) and 431 to 434 (NKID). A G4 region spans residues 431 to 434 (NKID). Residues 467–469 (SAM) form a G5 region.

The protein belongs to the TRAFAC class translation factor GTPase superfamily. Classic translation factor GTPase family. IF-2 subfamily.

The protein localises to the cytoplasm. One of the essential components for the initiation of protein synthesis. Protects formylmethionyl-tRNA from spontaneous hydrolysis and promotes its binding to the 30S ribosomal subunits. Also involved in the hydrolysis of GTP during the formation of the 70S ribosomal complex. In Jannaschia sp. (strain CCS1), this protein is Translation initiation factor IF-2.